The primary structure comprises 291 residues: MKSGFVSIIGRTNAGKSTLINSLLEEKIALVSHKQNATRRKIKAIVIHEKNQIIFIDTPGLHESGATFNQLLVQSAIKSMEDCDVILFVASVFDSTKDYENFLSLNPQVSHIIALNKVDLTDNATLLKKLSEYAKFSEHFKAILPYSSKKKSYKKGLLDEIVKCLNEHEYFYDPEFLSVNSEKELYRDFILESIYENLSDELPYSSEVLINRTKDTPNLLILEANIITDTNSHKGMFIGKEGATLKRIGKDARFKISKLAQKKVLLKLFVTVKKNWQKDEEFLKKLLNDEN.

Residues 2–167 (KSGFVSIIGR…LDEIVKCLNE (166 aa)) enclose the Era-type G domain. Residues 10–17 (GRTNAGKS) form a G1 region. 10 to 17 (GRTNAGKS) lines the GTP pocket. The tract at residues 36–40 (NATRR) is G2. Residues 57 to 60 (DTPG) form a G3 region. Residues 57 to 61 (DTPGL) and 116 to 119 (NKVD) each bind GTP. The tract at residues 116-119 (NKVD) is G4. Residues 146–148 (YSS) are G5. The KH type-2 domain occupies 186–274 (YRDFILESIY…LLKLFVTVKK (89 aa)).

This sequence belongs to the TRAFAC class TrmE-Era-EngA-EngB-Septin-like GTPase superfamily. Era GTPase family. In terms of assembly, monomer.

Its subcellular location is the cytoplasm. It is found in the cell inner membrane. In terms of biological role, an essential GTPase that binds both GDP and GTP, with rapid nucleotide exchange. Plays a role in 16S rRNA processing and 30S ribosomal subunit biogenesis and possibly also in cell cycle regulation and energy metabolism. The sequence is that of GTPase Era from Campylobacter jejuni subsp. doylei (strain ATCC BAA-1458 / RM4099 / 269.97).